The sequence spans 266 residues: Glucosamine-6-phosphate deaminase (266 aa).

Asp-72 acts as the Proton acceptor; for enolization step in catalysis. The active-site For ring-opening step is the Asp-141. His-143 functions as the Proton acceptor; for ring-opening step in the catalytic mechanism. Glu-148 acts as the For ring-opening step in catalysis.

This sequence belongs to the glucosamine/galactosamine-6-phosphate isomerase family. NagB subfamily. As to quaternary structure, homohexamer.

It carries out the reaction alpha-D-glucosamine 6-phosphate + H2O = beta-D-fructose 6-phosphate + NH4(+). It participates in amino-sugar metabolism; N-acetylneuraminate degradation; D-fructose 6-phosphate from N-acetylneuraminate: step 5/5. Allosterically activated by N-acetylglucosamine 6-phosphate (GlcNAc6P). In terms of biological role, catalyzes the reversible isomerization-deamination of glucosamine 6-phosphate (GlcN6P) to form fructose 6-phosphate (Fru6P) and ammonium ion. The polypeptide is Glucosamine-6-phosphate deaminase (Pectobacterium atrosepticum (strain SCRI 1043 / ATCC BAA-672) (Erwinia carotovora subsp. atroseptica)).